Consider the following 523-residue polypeptide: Tyrosine ammonia-lyase (523 aa).

Tyr-60 serves as the catalytic Proton donor/acceptor. Position 89 (His-89) interacts with substrate. Positions 149 to 151 form a cross-link, 5-imidazolinone (Ala-Gly); it reads ASG. Residue Ser-150 is modified to 2,3-didehydroalanine (Ser). Substrate-binding positions include Arg-303 and 432-436; that span reads NAANQ.

Belongs to the PAL/histidase family. In terms of assembly, homotetramer. Post-translationally, contains an active site 4-methylidene-imidazol-5-one (MIO), which is formed autocatalytically by cyclization and dehydration of residues Ala-Ser-Gly.

The catalysed reaction is L-tyrosine = (E)-4-coumarate + NH4(+). Catalyzes the non-oxidative deamination of L-tyrosine. Has very low phenylalanine ammonia-lyase activity (in vitro). This is Tyrosine ammonia-lyase (hutH) from Cereibacter sphaeroides (strain ATCC 17023 / DSM 158 / JCM 6121 / CCUG 31486 / LMG 2827 / NBRC 12203 / NCIMB 8253 / ATH 2.4.1.) (Rhodobacter sphaeroides).